Reading from the N-terminus, the 208-residue chain is V-type ATP synthase subunit D (208 aa).

It belongs to the V-ATPase D subunit family.

Functionally, produces ATP from ADP in the presence of a proton gradient across the membrane. The chain is V-type ATP synthase subunit D from Chlamydia caviae (strain ATCC VR-813 / DSM 19441 / 03DC25 / GPIC) (Chlamydophila caviae).